Consider the following 193-residue polypeptide: Nucleoside triphosphate pyrophosphatase (193 aa).

Asp-69 (proton acceptor) is an active-site residue.

The protein belongs to the Maf family. Requires a divalent metal cation as cofactor.

It is found in the cytoplasm. The catalysed reaction is a ribonucleoside 5'-triphosphate + H2O = a ribonucleoside 5'-phosphate + diphosphate + H(+). The enzyme catalyses a 2'-deoxyribonucleoside 5'-triphosphate + H2O = a 2'-deoxyribonucleoside 5'-phosphate + diphosphate + H(+). Its function is as follows. Nucleoside triphosphate pyrophosphatase. May have a dual role in cell division arrest and in preventing the incorporation of modified nucleotides into cellular nucleic acids. The sequence is that of Nucleoside triphosphate pyrophosphatase from Parasynechococcus marenigrum (strain WH8102).